We begin with the raw amino-acid sequence, 138 residues long: Putative pre-16S rRNA nuclease (138 aa).

The protein belongs to the YqgF nuclease family.

It localises to the cytoplasm. In terms of biological role, could be a nuclease involved in processing of the 5'-end of pre-16S rRNA. The chain is Putative pre-16S rRNA nuclease from Salmonella dublin (strain CT_02021853).